The following is a 507-amino-acid chain: Histidine ammonia-lyase (507 aa).

The segment at residues 141-143 (ASG) is a cross-link (5-imidazolinone (Ala-Gly)). The residue at position 142 (Ser-142) is a 2,3-didehydroalanine (Ser).

This sequence belongs to the PAL/histidase family. In terms of processing, contains an active site 4-methylidene-imidazol-5-one (MIO), which is formed autocatalytically by cyclization and dehydration of residues Ala-Ser-Gly.

Its subcellular location is the cytoplasm. It catalyses the reaction L-histidine = trans-urocanate + NH4(+). It functions in the pathway amino-acid degradation; L-histidine degradation into L-glutamate; N-formimidoyl-L-glutamate from L-histidine: step 1/3. The sequence is that of Histidine ammonia-lyase from Cereibacter sphaeroides (strain ATCC 17029 / ATH 2.4.9) (Rhodobacter sphaeroides).